A 298-amino-acid chain; its full sequence is N-acetylmuramic acid 6-phosphate etherase (298 aa).

One can recognise an SIS domain in the interval 55–218 (IHAQVSGGGR…STGLMIKSGK (164 aa)). Glutamate 83 (proton donor) is an active-site residue. Glutamate 114 is a catalytic residue.

It belongs to the GCKR-like family. MurNAc-6-P etherase subfamily. In terms of assembly, homodimer.

The catalysed reaction is N-acetyl-D-muramate 6-phosphate + H2O = N-acetyl-D-glucosamine 6-phosphate + (R)-lactate. The protein operates within amino-sugar metabolism; 1,6-anhydro-N-acetylmuramate degradation. Its pathway is amino-sugar metabolism; N-acetylmuramate degradation. It functions in the pathway cell wall biogenesis; peptidoglycan recycling. Functionally, specifically catalyzes the cleavage of the D-lactyl ether substituent of MurNAc 6-phosphate, producing GlcNAc 6-phosphate and D-lactate. Together with AnmK, is also required for the utilization of anhydro-N-acetylmuramic acid (anhMurNAc) either imported from the medium or derived from its own cell wall murein, and thus plays a role in cell wall recycling. The chain is N-acetylmuramic acid 6-phosphate etherase from Escherichia coli O7:K1 (strain IAI39 / ExPEC).